The sequence spans 509 residues: Zinc finger CCCH-type with G patch domain-containing protein (509 aa).

The interval 41-61 is disordered; that stretch reads TRGSEPEATSDTKTPETSDNI. Positions 47-58 are enriched in polar residues; it reads EATSDTKTPETS. The segment at 155–178 adopts a C3H1-type zinc-finger fold; the sequence is PCNYFLEGECRFDEVRCRYSHGAL. Positions 254–278 are disordered; sequence DDDLTSESEESNETDGSDAGNDSDM. One can recognise a G-patch domain in the interval 310-356; that stretch reads TRGIGSKLMANMGYIHGTGLGSDGRGIVTPVSAQILPQGRSLDACME. The tract at residues 410–433 is disordered; the sequence is GSQQTENANKKTKPNNLQQHSNKT. The span at 423–433 shows a compositional bias: polar residues; sequence PNNLQQHSNKT.

It localises to the nucleus. In terms of biological role, transcription repressor. This Drosophila mojavensis (Fruit fly) protein is Zinc finger CCCH-type with G patch domain-containing protein.